A 439-amino-acid polypeptide reads, in one-letter code: Methylenetetrahydrofolate--tRNA-(uracil-5-)-methyltransferase TrmFO (439 aa).

Residue 8 to 13 (GAGLAG) coordinates FAD.

Belongs to the MnmG family. TrmFO subfamily. It depends on FAD as a cofactor.

It is found in the cytoplasm. It catalyses the reaction uridine(54) in tRNA + (6R)-5,10-methylene-5,6,7,8-tetrahydrofolate + NADH + H(+) = 5-methyluridine(54) in tRNA + (6S)-5,6,7,8-tetrahydrofolate + NAD(+). It carries out the reaction uridine(54) in tRNA + (6R)-5,10-methylene-5,6,7,8-tetrahydrofolate + NADPH + H(+) = 5-methyluridine(54) in tRNA + (6S)-5,6,7,8-tetrahydrofolate + NADP(+). Catalyzes the folate-dependent formation of 5-methyl-uridine at position 54 (M-5-U54) in all tRNAs. This chain is Methylenetetrahydrofolate--tRNA-(uracil-5-)-methyltransferase TrmFO, found in Magnetococcus marinus (strain ATCC BAA-1437 / JCM 17883 / MC-1).